The following is a 605-amino-acid chain: Isocitrate dehydrogenase kinase/phosphatase (605 aa).

Residues 327–333 and Lys348 contribute to the ATP site; that span reads APGIKGL. Asp383 is a catalytic residue.

It belongs to the AceK family.

It is found in the cytoplasm. The enzyme catalyses L-seryl-[isocitrate dehydrogenase] + ATP = O-phospho-L-seryl-[isocitrate dehydrogenase] + ADP + H(+). Functionally, bifunctional enzyme which can phosphorylate or dephosphorylate isocitrate dehydrogenase (IDH) on a specific serine residue. This is a regulatory mechanism which enables bacteria to bypass the Krebs cycle via the glyoxylate shunt in response to the source of carbon. When bacteria are grown on glucose, IDH is fully active and unphosphorylated, but when grown on acetate or ethanol, the activity of IDH declines drastically concomitant with its phosphorylation. The polypeptide is Isocitrate dehydrogenase kinase/phosphatase (Burkholderia multivorans (strain ATCC 17616 / 249)).